A 727-amino-acid chain; its full sequence is Transcription activator of gluconeogenesis TRV_01442 (727 aa).

A compositionally biased stretch (polar residues) spans M1–E32. Residues M1–K62 are disordered. Positions A39–R55 are enriched in basic and acidic residues. Positions C65–C93 form a DNA-binding region, zn(2)-C6 fungal-type. Composition is skewed to polar residues over residues N129–A213, P267–I277, and M361–N379. 5 disordered regions span residues N129–T224, D264–S297, S353–Q399, N533–S567, and G627–W666. Composition is skewed to low complexity over residues S380–Q399 and G543–S553. Positions E639–R661 are enriched in polar residues.

Belongs to the ERT1/acuK family.

The protein resides in the nucleus. Functionally, transcription factor which regulates nonfermentable carbon utilization. Activator of gluconeogenetic genes. This chain is Transcription activator of gluconeogenesis TRV_01442, found in Trichophyton verrucosum (strain HKI 0517).